A 401-amino-acid polypeptide reads, in one-letter code: Calreticulin (401 aa).

A signal peptide spans 1–18 (MRKELWLGLLLSSQAVLS). A disulfide bridge connects residues Cys-103 and Cys-134. The an alpha-D-glucoside site is built by Tyr-107, Lys-109, Tyr-125, and Asp-132. 7 tandem repeats follow at residues 187–198 (KESGTLEEDWEI), 206–217 (DPEDKKPADWVD), 223–234 (DPEDKKPEDWDK), 241–252 (DPDATQPDDWDE), 256–266 (GKWEAPMISNP), 270–280 (GEWKAKKIPNP), and 284–294 (GVWKPRDIPNP). A 4 X approximate repeats region spans residues 187-252 (KESGTLEEDW…DATQPDDWDE (66 aa)). 2 stretches are compositionally biased toward basic and acidic residues: residues 199 to 214 (LKPK…KPAD) and 224 to 236 (PEDK…DKEP). Residues 199–263 (LKPKTIPDPE…EDGKWEAPMI (65 aa)) are disordered. The span at 246-256 (QPDDWDEEEDG) shows a compositional bias: acidic residues. The interval 256 to 294 (GKWEAPMISNPKYKGEWKAKKIPNPAYKGVWKPRDIPNP) is 3 X approximate repeats. An alpha-D-glucoside is bound at residue Asp-314. The tract at residues 341–401 (DQTNGATKDA…EEEDDKKDEL (61 aa)) is disordered. Over residues 348–381 (KDAEKKAFDSAEADKRKKEEDERKKQEEEEKKTA) the composition is skewed to basic and acidic residues. Residues 382-401 (EEDEDDDDEEEEEDDKKDEL) are compositionally biased toward acidic residues. Residues 398 to 401 (KDEL) carry the Prevents secretion from ER motif.

Belongs to the calreticulin family.

Its subcellular location is the endoplasmic reticulum lumen. Its function is as follows. Molecular calcium-binding chaperone promoting folding, oligomeric assembly and quality control in the ER via the calreticulin/calnexin cycle. This lectin may interact transiently with almost all of the monoglucosylated glycoproteins that are synthesized in the ER. The sequence is that of Calreticulin from Euglena gracilis.